The following is a 213-amino-acid chain: MAITQFRLFKVCTCLATVFSFLKRLICRSGRGRKLSGDQITLPTTVDYSSVPKQTDVEEWTSWDEDAPTSVKIEGGNGNVATQQNALEQLEPDYFKDMTPTIRKTQKIIIKKREPLNFGIPDGSTGFSSRLAATQDMPFIHQSPELGDLDTWQENTNAWEEEEDAAWQAEEVLRQQKIADREKRAAEQQRKRMEKEAQRLMRKEQNKIGVKLS.

Over 1–6 the chain is Extracellular; the sequence is MAITQF. The helical; Signal-anchor for type III membrane protein transmembrane segment at 7 to 27 threads the bilayer; the sequence is RLFKVCTCLATVFSFLKRLIC. Over 28–213 the chain is Cytoplasmic; sequence RSGRGRKLSG…EQNKIGVKLS (186 aa). A Phosphoserine modification is found at S36. T41 is subject to Phosphothreonine. Y94 carries the post-translational modification Phosphotyrosine. The stretch at 163–211 forms a coiled coil; sequence EDAAWQAEEVLRQQKIADREKRAAEQQRKRMEKEAQRLMRKEQNKIGVK. The span at 179–206 shows a compositional bias: basic and acidic residues; the sequence is ADREKRAAEQQRKRMEKEAQRLMRKEQN. Residues 179–213 form a disordered region; sequence ADREKRAAEQQRKRMEKEAQRLMRKEQNKIGVKLS.

Homodimer.

The protein resides in the golgi apparatus membrane. Functionally, may participate in suppression of cell proliferation and induces apoptotic cell death through activation of interleukin-1-beta converting enzyme (ICE)-like proteases. This is Receptor-binding cancer antigen expressed on SiSo cells (EBAG9) from Canis lupus familiaris (Dog).